Consider the following 228-residue polypeptide: Octanoyltransferase (228 aa).

Residues 30–214 enclose the BPL/LPL catalytic domain; that stretch reads KKIGDTLLLL…YFGKVFGKSL (185 aa). Substrate is bound by residues 75 to 82, 144 to 146, and 157 to 159; these read RGGDVTYH, AIG, and GFA. Cysteine 175 (acyl-thioester intermediate) is an active-site residue.

It belongs to the LipB family.

It is found in the cytoplasm. The enzyme catalyses octanoyl-[ACP] + L-lysyl-[protein] = N(6)-octanoyl-L-lysyl-[protein] + holo-[ACP] + H(+). It functions in the pathway protein modification; protein lipoylation via endogenous pathway; protein N(6)-(lipoyl)lysine from octanoyl-[acyl-carrier-protein]: step 1/2. Its function is as follows. Catalyzes the transfer of endogenously produced octanoic acid from octanoyl-acyl-carrier-protein onto the lipoyl domains of lipoate-dependent enzymes. Lipoyl-ACP can also act as a substrate although octanoyl-ACP is likely to be the physiological substrate. The protein is Octanoyltransferase of Caldicellulosiruptor bescii (strain ATCC BAA-1888 / DSM 6725 / KCTC 15123 / Z-1320) (Anaerocellum thermophilum).